A 602-amino-acid chain; its full sequence is Protein SHORT-ROOT 1 (602 aa).

Low complexity predominate over residues 12–55 (AASEQQQQQQQSASYNSRSTTSSGSRSSSHQTNASYSYYHHSSN). Disordered regions lie at residues 12-69 (AASE…YYYG), 101-145 (DFSS…TAAG), and 165-185 (DFSS…AVGG). Positions 56 to 68 (SGGGGGGGGGYYY) are enriched in gly residues. The segment covering 122–145 (PPASSTPTGTAPTPPLSTSSTAAG) has biased composition (low complexity). The segment covering 173–185 (SGGGTASSGAVGG) has biased composition (gly residues). One can recognise a GRAS domain in the interval 183 to 601 (VGGGGGGRWA…QPLVWASAWR (419 aa)). Positions 190-253 (RWASQLLLEC…LTASGPRTLR (64 aa)) are leucine repeat I (LRI). The segment at 272 to 349 (ALRFQELSPW…PHLSITTVVS (78 aa)) is VHIID. The VHIID signature appears at 311 to 315 (FHILD). The leucine repeat II (LRII) stretch occupies residues 365-401 (EIGQRMEKFARLMGVPFRFRAVHHSGDLAELDLDALD). The tract at residues 411–517 (LAVNCVNSLR…ERGAGRAIVD (107 aa)) is PFYRE. An SAW region spans residues 520 to 601 (SCPASESMER…QPLVWASAWR (82 aa)).

The protein belongs to the GRAS family. As to quaternary structure, interacts with SCR1. Interacts with SMOS1. As to expression, expressed in leaves and roots. Detected in the stele, the endodermis and part of the cortex.

It localises to the nucleus. Transcription factor required for the asymmetric cell division involved in radial pattern formation in roots. Essential for both cell division and cell specification. The chain is Protein SHORT-ROOT 1 from Oryza sativa subsp. japonica (Rice).